We begin with the raw amino-acid sequence, 225 residues long: 7-cyano-7-deazaguanine synthase (225 aa).

10 to 20 provides a ligand contact to ATP; that stretch reads LSGGIDSATAA. Zn(2+)-binding residues include Cys-191, Cys-199, Cys-202, and Cys-205.

This sequence belongs to the QueC family. Zn(2+) serves as cofactor.

It catalyses the reaction 7-carboxy-7-deazaguanine + NH4(+) + ATP = 7-cyano-7-deazaguanine + ADP + phosphate + H2O + H(+). It functions in the pathway purine metabolism; 7-cyano-7-deazaguanine biosynthesis. Its function is as follows. Catalyzes the ATP-dependent conversion of 7-carboxy-7-deazaguanine (CDG) to 7-cyano-7-deazaguanine (preQ(0)). The polypeptide is 7-cyano-7-deazaguanine synthase (Prochlorococcus marinus (strain NATL1A)).